The chain runs to 735 residues: Alpha-adducin (735 aa).

Methionine 1 carries the post-translational modification N-acetylmethionine. Low complexity predominate over residues 1–11 (MNGDTRAAVVT). A disordered region spans residues 1 to 21 (MNGDTRAAVVTSPPPTTAPHK). At serine 12 the chain carries Phosphoserine. Serine 59 carries the phosphoserine; by PKA modification. Residue serine 64 is modified to Phosphoserine. Phosphothreonine is present on threonine 331. Phosphoserine occurs at positions 334, 353, and 355. Threonine 358 is modified (phosphothreonine). Phosphoserine occurs at positions 364 and 366. A Phosphoserine; by PKA modification is found at serine 408. Disordered regions lie at residues 418-486 (GHSF…SAVP) and 576-735 (RREV…KSDS). Serine 427 carries the phosphoserine modification. Threonine 429 carries the post-translational modification Phosphothreonine. Serine 431 is modified (phosphoserine). Serine 436 is subject to Phosphoserine; by PKA. Threonine 445 is modified (phosphothreonine; by ROCK2). Serine 464 and serine 465 each carry phosphoserine. At threonine 480 the chain carries Phosphothreonine; by ROCK2. Phosphoserine; by PKA is present on serine 481. The span at 576 to 601 (RREVERKQKGSEENLDETREQKEKSP) shows a compositional bias: basic and acidic residues. Serine 586, serine 600, and serine 605 each carry phosphoserine. Residue threonine 610 is modified to Phosphothreonine. Residue serine 613 is modified to Phosphoserine. Residue threonine 614 is modified to Phosphothreonine. A compositionally biased stretch (low complexity) spans 678–712 (EPASASAPGAEEVASPATEEGSPMDPGSDGSPGKS). Phosphoserine occurs at positions 705, 708, and 712. The segment covering 713–735 (PSKKKKKFRTPSFLKKSKKKSDS) has biased composition (basic residues). Phosphoserine; by PKC is present on serine 714. The interval 715–732 (KKKKKFRTPSFLKKSKKK) is interaction with calmodulin. A Phosphoserine; by PKA and PKC modification is found at serine 724.

Belongs to the aldolase class II family. Adducin subfamily. As to quaternary structure, heterodimer of an alpha and a beta subunit or an alpha and a gamma subunit.

Its subcellular location is the cytoplasm. The protein localises to the cytoskeleton. It is found in the cell membrane. Its function is as follows. Membrane-cytoskeleton-associated protein that promotes the assembly of the spectrin-actin network. Binds to calmodulin. In Rattus norvegicus (Rat), this protein is Alpha-adducin (Add1).